Here is a 57-residue protein sequence, read N- to C-terminus: Plasma membrane proteolipid 3 (57 aa).

A helical transmembrane segment spans residues 34–54 (INILLTILGYLPGIVHALYII).

This sequence belongs to the UPF0057 (PMP3) family.

It localises to the cell membrane. Plays a role in the regulation of membrane potential. Could mediate a proton leak. The protein is Plasma membrane proteolipid 3 (pmp-1) of Neurospora crassa (strain ATCC 24698 / 74-OR23-1A / CBS 708.71 / DSM 1257 / FGSC 987).